A 443-amino-acid polypeptide reads, in one-letter code: Enolase B (443 aa).

Substrate-binding residues include H156 and E165. E208 functions as the Proton donor in the catalytic mechanism. D243, E296, and D323 together coordinate Mg(2+). 2 residues coordinate substrate: E296 and D323. K348 serves as the catalytic Proton acceptor. Residues 375–378 and K399 contribute to the substrate site; that span reads SHRS.

Belongs to the enolase family. In terms of assembly, homodimer. The cofactor is Mg(2+).

It is found in the cytoplasm. The enzyme catalyses (2R)-2-phosphoglycerate = phosphoenolpyruvate + H2O. The protein operates within carbohydrate degradation; glycolysis; pyruvate from D-glyceraldehyde 3-phosphate: step 4/5. This is Enolase B (enoB) from Dictyostelium discoideum (Social amoeba).